We begin with the raw amino-acid sequence, 151 residues long: Conidium-specific protein (151 aa).

The tract at residues 1 to 72 is disordered; sequence MAKPHCSSRS…FSGDPDSEVE (72 aa). Residues 48–60 are compositionally biased toward basic and acidic residues; the sequence is RKDNSADKGDTLR.

This Emericella nidulans (strain FGSC A4 / ATCC 38163 / CBS 112.46 / NRRL 194 / M139) (Aspergillus nidulans) protein is Conidium-specific protein (SpoC1-C1D).